The following is a 250-amino-acid chain: Short-chain dehydrogenase RED3 (250 aa).

NADP(+) contacts are provided by Ile-16, Ser-35, Glu-63, and Asn-91. Residues Ser-145 and Tyr-164 each act as proton donor in the active site. Residues Tyr-164, Lys-168, Val-195, and Ser-197 each coordinate NADP(+). Lys-168 acts as the Lowers pKa of active site Tyr in catalysis.

Belongs to the short-chain dehydrogenases/reductases (SDR) family.

The protein operates within polyketide biosynthesis. In terms of biological role, short-chain dehydrogenase; part of the gene cluster that mediates the biosynthesis of pyriculol and pyriculariol, two heptaketides that induce lesion formation upon application on rice leaves but are dispensable for pathogenicity. The highly reducing polyketide synthase synthesizes the heptaketide backbone of pyriculol and pyriculariol. Pyriculol and pyriculariol contain several hydroxyl moieties and double bonds, so it can be assumed that several reduction steps occur during biosynthesis. These reactions could be executed by PKS19 itself or partly by the tailoring enzymes OXR1, OXR2, RED1, RED2 or RED3, identified within the cluster. The FAD-linked oxidoreductase OXR1 is the only tailoring enzyme for which the function has been determined yet, and is involved in the oxidation of dihydropyriculol and dihydropyriculariol into pyriculol and pyriculariol, respectively. In Pyricularia oryzae (strain 70-15 / ATCC MYA-4617 / FGSC 8958) (Rice blast fungus), this protein is Short-chain dehydrogenase RED3.